Consider the following 474-residue polypeptide: Shufflon protein A (474 aa).

The interval 1-361 is constant region; it reads MKKYDRGWAS…TGAILSCQSG (361 aa). The segment at 362–474 is variable region; sequence TWKTSGSLNG…GVFSVFGYQT (113 aa).

The chain is Shufflon protein A from Escherichia coli.